The following is a 224-amino-acid chain: Glutathione S-transferase D7 (224 aa).

A GST N-terminal domain is found at 2 to 83 (PNLDLYNFPM…YLVEKYGKPD (82 aa)). Residues 53–55 (HTI) and 67–69 (ESR) each bind glutathione. Residues 90–210 (DPQKRALINQ…LESLQQGKKF (121 aa)) form the GST C-terminal domain.

The protein belongs to the GST superfamily. Delta family. As to quaternary structure, homodimer.

The catalysed reaction is RX + glutathione = an S-substituted glutathione + a halide anion + H(+). Its function is as follows. Conjugation of reduced glutathione to a wide number of exogenous and endogenous hydrophobic electrophiles. May be involved in detoxification. The polypeptide is Glutathione S-transferase D7 (Drosophila melanogaster (Fruit fly)).